A 245-amino-acid chain; its full sequence is 1-(5-phosphoribosyl)-5-[(5-phosphoribosylamino)methylideneamino] imidazole-4-carboxamide isomerase (245 aa).

Aspartate 8 serves as the catalytic Proton acceptor. The active-site Proton donor is the aspartate 129.

The protein belongs to the HisA/HisF family.

The protein localises to the cytoplasm. The enzyme catalyses 1-(5-phospho-beta-D-ribosyl)-5-[(5-phospho-beta-D-ribosylamino)methylideneamino]imidazole-4-carboxamide = 5-[(5-phospho-1-deoxy-D-ribulos-1-ylimino)methylamino]-1-(5-phospho-beta-D-ribosyl)imidazole-4-carboxamide. It participates in amino-acid biosynthesis; L-histidine biosynthesis; L-histidine from 5-phospho-alpha-D-ribose 1-diphosphate: step 4/9. This Geotalea daltonii (strain DSM 22248 / JCM 15807 / FRC-32) (Geobacter daltonii) protein is 1-(5-phosphoribosyl)-5-[(5-phosphoribosylamino)methylideneamino] imidazole-4-carboxamide isomerase.